Reading from the N-terminus, the 354-residue chain is Protein RecA (354 aa).

65–72 (GPESSGKT) serves as a coordination point for ATP.

Belongs to the RecA family.

The protein localises to the cytoplasm. Functionally, can catalyze the hydrolysis of ATP in the presence of single-stranded DNA, the ATP-dependent uptake of single-stranded DNA by duplex DNA, and the ATP-dependent hybridization of homologous single-stranded DNAs. It interacts with LexA causing its activation and leading to its autocatalytic cleavage. The chain is Protein RecA from Pseudomonas savastanoi pv. phaseolicola (strain 1448A / Race 6) (Pseudomonas syringae pv. phaseolicola (strain 1448A / Race 6)).